The primary structure comprises 875 residues: MAASPEQFRGQARLPRCASPLSYDLRLRPDLAACAFSGSAAVAVAVSAPTRFLVLNAAELAVDGSSVRFQDLVPSEVVQFEEDEIVVIGFGQDLPIGEGVLKMDFTGTLNDQMRGFYRSKYEYKGESRNMAVTQFEAADARRCFPCWDEPAFKAKFKLTLEVPSELVALSNMPVIKETVHGPLKTVYYEESPLMSTYLVAIVVGLFDYIEGSTLEGTKVRVYTQVGKSNQGKFALDVAVKSLDLFKDYFATPYPLPKLDMVAIPDFAAGAMENYGLVTYRETALLYDELLSSASNKQQVAITVAHELAHQWFGNLVTMEWWTHLWLNEGFASWVSYLAVEALFPEWNNWTQFLDETTSGLRLDALAESHPIEVDINHASEIDAIFDSISYDKGASVIRMLQSYLGAERFQKALASYIKKYAYSNAKTEDLWAVLEEESGEPVKDLMTTWTKQQGYPVIYAKLDGHDLHLEQAQFLSDGSSGPGLWIVPITSCCGSYDAQKKFLLKGKTDKVHIDLTASQNAGGEKGENCWIKLNVDQTGFYRVKYDDELAAGLEKAIKANKLSLMDKIGIVEDSYSLSVARKQTLTSLLRLLNAYRNESDYTVLSHVTSVCLGIDKISVDATPELSRDIKQLLINLLLSAAKTLGWDPKEGESHLDVMLRSLLLIALVKLGHDETINEGVRRFHIFIKDRKTNILPPDTRKASYLAVMRTVTTSSRAGYDALLKIYRETAEAQEKSRILGSLSSCLDKDIVLEALNFMLTDEVRNQDAFYVLGGISLEGREVAWAWLKENWDHVLKTWPSSSLISDFVKSTVSRFTTEEKAAEVSEFFAGKTKPSFERALKQSLERVRISARWIESIRSEPNLAQTVNELLQHDM.

The tract at residues 96-203 (IGEGVLKMDF…MSTYLVAIVV (108 aa)) is required for membrane association. Residues E136 and 269 to 273 (GAMEN) each bind substrate. Position 305 (H305) interacts with Zn(2+). The Proton acceptor role is filled by E306. H309 and E328 together coordinate Zn(2+). A Dileucine internalization motif motif is present at residues 722-723 (LL).

It belongs to the peptidase M1 family. As to quaternary structure, homodimer. Requires Zn(2+) as cofactor.

It localises to the membrane. The protein localises to the microsome membrane. The protein resides in the cytoplasm. It catalyses the reaction Release of an N-terminal amino acid, Xaa-|-Yaa- from a peptide, amide or arylamide. Xaa is preferably Ala, but may be most amino acids including Pro (slow action). When a terminal hydrophobic residue is followed by a prolyl residue, the two may be released as an intact Xaa-Pro dipeptide.. The sequence is that of Aminopeptidase M1-B from Oryza sativa subsp. japonica (Rice).